Consider the following 141-residue polypeptide: Large ribosomal subunit protein uL11 (141 aa).

The protein belongs to the universal ribosomal protein uL11 family. In terms of assembly, part of the ribosomal stalk of the 50S ribosomal subunit. Interacts with L10 and the large rRNA to form the base of the stalk. L10 forms an elongated spine to which L12 dimers bind in a sequential fashion forming a multimeric L10(L12)X complex. One or more lysine residues are methylated.

Functionally, forms part of the ribosomal stalk which helps the ribosome interact with GTP-bound translation factors. The chain is Large ribosomal subunit protein uL11 from Campylobacter lari (strain RM2100 / D67 / ATCC BAA-1060).